The primary structure comprises 454 residues: Cobyrinate a,c-diamide synthase (454 aa).

The GATase cobBQ-type domain maps to 247–442; the sequence is KIGIAMDSAF…IHAHWASNPN (196 aa). The active-site Nucleophile is the Cys-329.

Belongs to the CobB/CbiA family. Mg(2+) is required as a cofactor.

It catalyses the reaction cob(II)yrinate + 2 L-glutamine + 2 ATP + 2 H2O = cob(II)yrinate a,c diamide + 2 L-glutamate + 2 ADP + 2 phosphate + 2 H(+). The protein operates within cofactor biosynthesis; adenosylcobalamin biosynthesis; cob(II)yrinate a,c-diamide from sirohydrochlorin (anaerobic route): step 10/10. Its function is as follows. Catalyzes the ATP-dependent amidation of the two carboxylate groups at positions a and c of cobyrinate, using either L-glutamine or ammonia as the nitrogen source. The protein is Cobyrinate a,c-diamide synthase of Leptospira interrogans serogroup Icterohaemorrhagiae serovar copenhageni (strain Fiocruz L1-130).